The chain runs to 946 residues: Inositol-trisphosphate 3-kinase B (946 aa).

Disordered stretches follow at residues 19 to 128 (EMKS…EEAK), 156 to 288 (AQSS…TRSC), 308 to 472 (ARVT…GIPS), 486 to 561 (KDLK…RKAC), and 580 to 638 (GALE…HTLD). Phosphoserine occurs at positions 43, 49, and 71. Positions 83-105 (NSSSGSGSGSSGSSVSSPSWAGR) are enriched in low complexity. Phosphoserine occurs at positions 204 and 269. Residues 396 to 411 (TTVSVQSAESSDSLSW) are compositionally biased toward polar residues. Low complexity predominate over residues 445–458 (GGSPTLGLLGGSPS). The span at 524–534 (TGVQSEGTWES) shows a compositional bias: polar residues. Positions 599 to 612 (SSSSASSTGFSSSY) are enriched in low complexity. Residues Ser-679, Lys-690, 730–732 (DDL), and Asp-743 each bind ATP. Substrate-binding residues include Lys-745 and Arg-766. Residues 768 to 776 (DMYQKMIEV) form a calmodulin-binding region. 793–800 (KPRYMQWR) contacts substrate. ATP-binding residues include Lys-817 and Asp-897. Substrate is bound at residue Lys-900.

The protein belongs to the inositol phosphokinase (IPK) family. As to quaternary structure, interacts with DMTN.

It is found in the cytoplasm. The protein localises to the cytoskeleton. It localises to the endoplasmic reticulum. The catalysed reaction is 1D-myo-inositol 1,4,5-trisphosphate + ATP = 1D-myo-inositol 1,3,4,5-tetrakisphosphate + ADP + H(+). IP3K is activated by calcium and calmodulin. Form B is much more sensitive to calcium/calmodulin than form A. In terms of biological role, catalyzes the phosphorylation of 1D-myo-inositol 1,4,5-trisphosphate (InsP3) into 1D-myo-inositol 1,3,4,5-tetrakisphosphate and participates to the regulation of calcium homeostasis. This is Inositol-trisphosphate 3-kinase B from Homo sapiens (Human).